The following is a 468-amino-acid chain: UDP-N-acetylmuramate--L-alanine ligase (468 aa).

An ATP-binding site is contributed by 114–120 (GTHGKTT).

This sequence belongs to the MurCDEF family.

It localises to the cytoplasm. It carries out the reaction UDP-N-acetyl-alpha-D-muramate + L-alanine + ATP = UDP-N-acetyl-alpha-D-muramoyl-L-alanine + ADP + phosphate + H(+). It participates in cell wall biogenesis; peptidoglycan biosynthesis. Cell wall formation. The chain is UDP-N-acetylmuramate--L-alanine ligase from Rhodopseudomonas palustris (strain HaA2).